Consider the following 79-residue polypeptide: Large ribosomal subunit protein uL24 (79 aa).

This sequence belongs to the universal ribosomal protein uL24 family. In terms of assembly, part of the 50S ribosomal subunit.

One of two assembly initiator proteins, it binds directly to the 5'-end of the 23S rRNA, where it nucleates assembly of the 50S subunit. In terms of biological role, one of the proteins that surrounds the polypeptide exit tunnel on the outside of the subunit. The sequence is that of Large ribosomal subunit protein uL24 from Lactobacillus delbrueckii subsp. bulgaricus (strain ATCC BAA-365 / Lb-18).